The chain runs to 351 residues: Phenylalanine--tRNA ligase alpha subunit (351 aa).

Glutamate 276 contacts Mg(2+).

The protein belongs to the class-II aminoacyl-tRNA synthetase family. Phe-tRNA synthetase alpha subunit type 1 subfamily. Tetramer of two alpha and two beta subunits. Requires Mg(2+) as cofactor.

It localises to the cytoplasm. It carries out the reaction tRNA(Phe) + L-phenylalanine + ATP = L-phenylalanyl-tRNA(Phe) + AMP + diphosphate + H(+). This is Phenylalanine--tRNA ligase alpha subunit from Psychrobacter arcticus (strain DSM 17307 / VKM B-2377 / 273-4).